The following is a 556-amino-acid chain: M-phase inducer phosphatase (556 aa).

Disordered regions lie at residues 165–186 (STDG…QERR) and 257–297 (TSGL…RPRK). A compositionally biased stretch (basic residues) spans 287–297 (KSAHPNMRPRK). The Rhodanese domain occupies 371 to 474 (MFDNIMIIDC…FFAEHRSLCY (104 aa)). Residue cysteine 421 is part of the active site. Positions 505–516 (RAQTFAFGQQSP) are enriched in polar residues. The segment at 505–556 (RAQTFAFGQQSPEMEDSPTGRCRNNPGDRKLLASPFNDSPGSRFPGRRMLSY) is disordered.

The protein belongs to the MPI phosphatase family.

It carries out the reaction O-phospho-L-tyrosyl-[protein] + H2O = L-tyrosyl-[protein] + phosphate. This protein functions as a dosage-dependent inducer in mitotic control. It is a tyrosine protein phosphatase required for progression of the cell cycle. It may directly dephosphorylate p34(cdc2) and activate the p34(cdc2) kinase activity. The polypeptide is M-phase inducer phosphatase (nimT) (Emericella nidulans (strain FGSC A4 / ATCC 38163 / CBS 112.46 / NRRL 194 / M139) (Aspergillus nidulans)).